Reading from the N-terminus, the 373-residue chain is NADPH-dependent 3-keto-steroid reductase Hsd3b5 (373 aa).

NADP(+) contacts are provided by residues 10–15 (GAGGFL), Tyr155, and Lys159. Lys159 functions as the Proton donor in the catalytic mechanism. Residues 288-308 (LSLLYWLAFLLETVSFLLRPV) traverse the membrane as a helical segment. Lys350 bears the N6-acetyllysine mark.

This sequence belongs to the 3-beta-HSD family. Expressed in the male liver, starting in late puberty.

It is found in the endoplasmic reticulum membrane. The protein localises to the mitochondrion membrane. The enzyme catalyses a 3beta-hydroxysteroid + NADP(+) = a 3-oxosteroid + NADPH + H(+). It catalyses the reaction 5alpha-androstane-3beta,17beta-diol + NADP(+) = 17beta-hydroxy-5alpha-androstan-3-one + NADPH + H(+). It participates in steroid metabolism. Its function is as follows. Responsible for the reduction of the oxo group on the C-3 of 5alpha-androstane steroids. Catalyzes the conversion of dihydrotestosterone to its inactive form 5alpha-androstanediol, that does not bind androgen receptor/AR. Does not function as an isomerase. In Mus musculus (Mouse), this protein is NADPH-dependent 3-keto-steroid reductase Hsd3b5.